A 295-amino-acid chain; its full sequence is Deleted in azoospermia-like (295 aa).

Positions 1–10 (MSTANPETPN) are enriched in polar residues. The segment at 1 to 25 (MSTANPETPNSTISREASTQSSSAA) is disordered. Low complexity predominate over residues 11–25 (STISREASTQSSSAA). The 76-residue stretch at 40–115 (NTVFVGGIDV…KKLKLGPAIR (76 aa)) folds into the RRM domain. The interval 80–132 (KGYGFVSFFNDVDVQKIVESQINFHGKKLKLGPAIRKQNLCAYHVQPRPLVFN) is homodimerization. The DAZ domain maps to 167-190 (AYPTYPNSPVQVITGYQLPVYNYQ). Tyrosine 276 carries the post-translational modification Phosphotyrosine.

The protein belongs to the RRM DAZ family. Homodimer and heterodimer. Multiple DAZL RRMs can bind to a single RNA containing multiple GUU triplets. Forms a heterodimer with DAZ. Interacts with BOLL, DAZAP1 and DAZAP2. Interacts with PUM2. As to expression, testis specific.

It localises to the cytoplasm. Its subcellular location is the nucleus. Functionally, RNA-binding protein, which is essential for gametogenesis in both males and females. Plays a central role during spermatogenesis. Acts by binding to the 3'-UTR of mRNA, specifically recognizing GUU triplets, and thereby regulating the translation of key transcripts. This is Deleted in azoospermia-like (DAZL) from Homo sapiens (Human).